The primary structure comprises 83 residues: Toxin AahP985 (83 aa).

An N-terminal signal peptide occupies residues 1–18 (MNYLVMISLALLIAGVDS). Positions 20-82 (RDAYIAKNDN…VPIKLSGECH (63 aa)) constitute an LCN-type CS-alpha/beta domain. 4 cysteine pairs are disulfide-bonded: Cys-30–Cys-81, Cys-34–Cys-54, Cys-40–Cys-64, and Cys-44–Cys-66.

The protein belongs to the long (4 C-C) scorpion toxin superfamily. Sodium channel inhibitor family. Alpha subfamily. As to expression, expressed by the venom gland.

The protein localises to the secreted. Binds voltage-independently at site-3 of sodium channels (Nav) and inhibits the inactivation of the activated channels, thereby blocking neuronal transmission. The chain is Toxin AahP985 from Androctonus australis (Sahara scorpion).